The chain runs to 301 residues: GTPase Era (301 aa).

An Era-type G domain is found at 7–173 (KSGFVALLGR…LNTINKYLPE (167 aa)). The G1 stretch occupies residues 15 to 22 (GRPNVGKS). 15 to 22 (GRPNVGKS) is a binding site for GTP. Residues 41–45 (QTTRN) form a G2 region. Residues 62–65 (DTPG) are G3. Residues 62–66 (DTPGI) and 123–126 (NKVD) each bind GTP. Residues 123-126 (NKVD) are G4. Residues 152 to 154 (ISA) are G5. Positions 204–281 (TSQEVPHATA…NLRLWVKVQH (78 aa)) constitute a KH type-2 domain.

It belongs to the TRAFAC class TrmE-Era-EngA-EngB-Septin-like GTPase superfamily. Era GTPase family. Monomer.

The protein localises to the cytoplasm. The protein resides in the cell membrane. An essential GTPase that binds both GDP and GTP, with rapid nucleotide exchange. Plays a role in 16S rRNA processing and 30S ribosomal subunit biogenesis and possibly also in cell cycle regulation and energy metabolism. The polypeptide is GTPase Era (Lactobacillus helveticus (strain DPC 4571)).